Here is a 310-residue protein sequence, read N- to C-terminus: Zinc finger CCCH domain-containing protein 14 (310 aa).

Residues 56–75 (ESLSPSPPSSSSPPSRVDTT) form a disordered region. Residues 84-129 (KLILEYDELNEHYELCLNRLQSLMTELDSLRHENDSLRFENSDLLK) are a coiled coil. Basic and acidic residues predominate over residues 155-167 (QISDSRSAKRNNQ). The segment at 155–174 (QISDSRSAKRNNQERNSLPK) is disordered. 2 C3H1-type zinc fingers span residues 232-260 (MMKT…HGID) and 270-298 (RYKT…HSLT).

As to expression, highly expressed in secondary cell wall-forming tissues and the xylem cells of roots. Expressed predominantly in inflorescence stems, flowers and siliques. Highly expressed in the basal portion of stems, where cells are undergoing secondary cell wall thickening.

In terms of biological role, functions probably as a transcriptional factor that activates genes involved in secondary cell wall biosynthesis. May play a role in both transcriptional and post-transcriptional regulation. Binds to ssDNA, dsDNA, and ribohomopolymers in vitro. Maybe involved in post-transcriptional regulation of its target genes. Targets RNA of a polygalacturonase, a well-known cell wall modifying gene. Functions redudantly with C3H15 to regulate secondary cell wall formation. C3H14 and C3H15 have overlapping roles in the regulation of secondary cell wall formation and anther development. C3H14 may contribute more to secondary cell wall thickening while C3H15 could be more important in anther development. May regulate at both the transcriptional and post-transcriptional levels the expression of many genes involved in various biological processes, particularly those associated with cell wall metabolism and pollen development. This Arabidopsis thaliana (Mouse-ear cress) protein is Zinc finger CCCH domain-containing protein 14.